Here is a 407-residue protein sequence, read N- to C-terminus: Phosphopentomutase (407 aa).

The Mn(2+) site is built by D10, D306, H311, D347, H348, and H359.

Belongs to the phosphopentomutase family. Mn(2+) serves as cofactor.

It is found in the cytoplasm. It catalyses the reaction 2-deoxy-alpha-D-ribose 1-phosphate = 2-deoxy-D-ribose 5-phosphate. It carries out the reaction alpha-D-ribose 1-phosphate = D-ribose 5-phosphate. The protein operates within carbohydrate degradation; 2-deoxy-D-ribose 1-phosphate degradation; D-glyceraldehyde 3-phosphate and acetaldehyde from 2-deoxy-alpha-D-ribose 1-phosphate: step 1/2. Its function is as follows. Isomerase that catalyzes the conversion of deoxy-ribose 1-phosphate (dRib-1-P) and ribose 1-phosphate (Rib-1-P) to deoxy-ribose 5-phosphate (dRib-5-P) and ribose 5-phosphate (Rib-5-P), respectively. The protein is Phosphopentomutase of Photorhabdus laumondii subsp. laumondii (strain DSM 15139 / CIP 105565 / TT01) (Photorhabdus luminescens subsp. laumondii).